The following is a 365-amino-acid chain: Phosphoserine aminotransferase (365 aa).

R42 provides a ligand contact to L-glutamate. Pyridoxal 5'-phosphate contacts are provided by residues 76-77 (AR), W103, T154, D175, and Q198. Residue K199 is modified to N6-(pyridoxal phosphate)lysine. 242-243 (NT) is a binding site for pyridoxal 5'-phosphate.

This sequence belongs to the class-V pyridoxal-phosphate-dependent aminotransferase family. SerC subfamily. In terms of assembly, homodimer. Pyridoxal 5'-phosphate is required as a cofactor.

Its subcellular location is the cytoplasm. The catalysed reaction is O-phospho-L-serine + 2-oxoglutarate = 3-phosphooxypyruvate + L-glutamate. It catalyses the reaction 4-(phosphooxy)-L-threonine + 2-oxoglutarate = (R)-3-hydroxy-2-oxo-4-phosphooxybutanoate + L-glutamate. The protein operates within amino-acid biosynthesis; L-serine biosynthesis; L-serine from 3-phospho-D-glycerate: step 2/3. Its pathway is cofactor biosynthesis; pyridoxine 5'-phosphate biosynthesis; pyridoxine 5'-phosphate from D-erythrose 4-phosphate: step 3/5. In terms of biological role, catalyzes the reversible conversion of 3-phosphohydroxypyruvate to phosphoserine and of 3-hydroxy-2-oxo-4-phosphonooxybutanoate to phosphohydroxythreonine. The chain is Phosphoserine aminotransferase from Blochmanniella floridana.